The following is a 121-amino-acid chain: Large ribosomal subunit protein bL12 (121 aa).

This sequence belongs to the bacterial ribosomal protein bL12 family. As to quaternary structure, homodimer. Part of the ribosomal stalk of the 50S ribosomal subunit. Forms a multimeric L10(L12)X complex, where L10 forms an elongated spine to which 2 to 4 L12 dimers bind in a sequential fashion. Binds GTP-bound translation factors.

Its function is as follows. Forms part of the ribosomal stalk which helps the ribosome interact with GTP-bound translation factors. Is thus essential for accurate translation. The chain is Large ribosomal subunit protein bL12 from Tremblaya princeps.